The sequence spans 147 residues: Protein phosphatase 1 regulatory subunit 14A (147 aa).

Basic residues predominate over residues methionine 1–leucine 11. The disordered stretch occupies residues methionine 1–valine 37. A Phosphoserine modification is found at serine 26. The inhibitory stretch occupies residues alanine 35–arginine 120. Phosphothreonine; by PKC is present on threonine 38. The tract at residues leucine 118–proline 147 is disordered. Residues proline 127–proline 137 are compositionally biased toward polar residues. 3 positions are modified to phosphoserine: serine 128, serine 134, and serine 136.

It belongs to the PP1 inhibitor family. In terms of tissue distribution, isoform 1 is detected in aorta and testis. Isoform 2 is detected in aorta.

It is found in the cytoplasm. Functionally, inhibitor of PPP1CA. Has over 1000-fold higher inhibitory activity when phosphorylated, creating a molecular switch for regulating the phosphorylation status of PPP1CA substrates and smooth muscle contraction. The chain is Protein phosphatase 1 regulatory subunit 14A (PPP1R14A) from Homo sapiens (Human).